We begin with the raw amino-acid sequence, 307 residues long: Ribosomal RNA small subunit methyltransferase H (307 aa).

S-adenosyl-L-methionine-binding positions include 34–36, Asp54, Phe79, Asp101, and Gln108; that span reads GGH.

It belongs to the methyltransferase superfamily. RsmH family.

It localises to the cytoplasm. The enzyme catalyses cytidine(1402) in 16S rRNA + S-adenosyl-L-methionine = N(4)-methylcytidine(1402) in 16S rRNA + S-adenosyl-L-homocysteine + H(+). Its function is as follows. Specifically methylates the N4 position of cytidine in position 1402 (C1402) of 16S rRNA. The sequence is that of Ribosomal RNA small subunit methyltransferase H from Ruthia magnifica subsp. Calyptogena magnifica.